The primary structure comprises 591 residues: Aspartate--tRNA ligase (591 aa).

Glutamate 174 provides a ligand contact to L-aspartate. Residues 198 to 201 are aspartate; the sequence is QLFK. An L-aspartate-binding site is contributed by arginine 220. ATP is bound by residues 220 to 222 and glutamine 229; that span reads RDE. Position 450 (histidine 450) interacts with L-aspartate. Glutamate 486 is a binding site for ATP. Residue arginine 493 participates in L-aspartate binding. Residue 538-541 coordinates ATP; that stretch reads GLDR.

Belongs to the class-II aminoacyl-tRNA synthetase family. Type 1 subfamily. As to quaternary structure, homodimer.

It is found in the cytoplasm. The enzyme catalyses tRNA(Asp) + L-aspartate + ATP = L-aspartyl-tRNA(Asp) + AMP + diphosphate. Functionally, catalyzes the attachment of L-aspartate to tRNA(Asp) in a two-step reaction: L-aspartate is first activated by ATP to form Asp-AMP and then transferred to the acceptor end of tRNA(Asp). The sequence is that of Aspartate--tRNA ligase from Leuconostoc mesenteroides subsp. mesenteroides (strain ATCC 8293 / DSM 20343 / BCRC 11652 / CCM 1803 / JCM 6124 / NCDO 523 / NBRC 100496 / NCIMB 8023 / NCTC 12954 / NRRL B-1118 / 37Y).